We begin with the raw amino-acid sequence, 190 residues long: Imidazoleglycerol-phosphate dehydratase (190 aa).

The protein belongs to the imidazoleglycerol-phosphate dehydratase family.

The protein resides in the cytoplasm. The enzyme catalyses D-erythro-1-(imidazol-4-yl)glycerol 3-phosphate = 3-(imidazol-4-yl)-2-oxopropyl phosphate + H2O. The protein operates within amino-acid biosynthesis; L-histidine biosynthesis; L-histidine from 5-phospho-alpha-D-ribose 1-diphosphate: step 6/9. The sequence is that of Imidazoleglycerol-phosphate dehydratase from Methanococcus maripaludis (strain C5 / ATCC BAA-1333).